A 478-amino-acid polypeptide reads, in one-letter code: PRAME family member 11 (478 aa).

One copy of the LRR 1; degenerate repeat lies at 99-126 (RWKLQVLDLQDVCENFWMVWSEAMAHGC). Residues 181 to 205 (HLCCKKLKILGMPFRNIRSILKMVN) form an LRR 2; degenerate repeat. The stretch at 206 to 232 (LDCIQEVEVNCKWILPILTQFTPYLGH) is one LRR 3; degenerate repeat. One copy of the LRR 4; degenerate repeat lies at 233 to 268 (LRNLQKLVLSHMDVSRYVSPEQKKEIVTQFTTQFLK). LRR repeat units follow at residues 269–294 (LRCL…LSCL), 295–326 (KTSL…SQLK), 327–347 (TLDL…QILL), 351–378 (AATL…ALSR), and 379–403 (CFEL…LLSH).

Belongs to the PRAME family.

This is PRAME family member 11 from Homo sapiens (Human).